The following is a 1183-amino-acid chain: Chromosome partition protein Smc (1183 aa).

Position 32 to 39 (32 to 39 (PNGSGKSN)) interacts with ATP. The stretch at 162 to 483 (EEAAGIKKLQ…KLSQDIREFE (322 aa)) forms a coiled coil. The SMC hinge domain occupies 519 to 632 (SGIDGVLISL…VENIDIATDI (114 aa)). The stretch at 666–1019 (INQIFERKKE…VMDLIQEIDE (354 aa)) forms a coiled coil.

Belongs to the SMC family. In terms of assembly, homodimer.

It is found in the cytoplasm. In terms of biological role, required for chromosome condensation and partitioning. The polypeptide is Chromosome partition protein Smc (Fusobacterium nucleatum subsp. nucleatum (strain ATCC 25586 / DSM 15643 / BCRC 10681 / CIP 101130 / JCM 8532 / KCTC 2640 / LMG 13131 / VPI 4355)).